A 77-amino-acid chain; its full sequence is Translation initiation factor IF-1, chloroplastic (77 aa).

The S1-like domain occupies 1 to 71 (MKEQKWIHEG…TRGRIIYRLR (71 aa)).

Belongs to the IF-1 family. As to quaternary structure, component of the 30S ribosomal translation pre-initiation complex which assembles on the 30S ribosome in the order IF-2 and IF-3, IF-1 and N-formylmethionyl-tRNA(fMet); mRNA recruitment can occur at any time during PIC assembly.

It localises to the plastid. The protein localises to the chloroplast. One of the essential components for the initiation of protein synthesis. Stabilizes the binding of IF-2 and IF-3 on the 30S subunit to which N-formylmethionyl-tRNA(fMet) subsequently binds. Helps modulate mRNA selection, yielding the 30S pre-initiation complex (PIC). Upon addition of the 50S ribosomal subunit IF-1, IF-2 and IF-3 are released leaving the mature 70S translation initiation complex. The polypeptide is Translation initiation factor IF-1, chloroplastic (Montinia caryophyllacea (Wild clove bush)).